The following is a 769-amino-acid chain: CO(2)-response secreted protease (769 aa).

An N-terminal signal peptide occupies residues 1–27 (MKGITFFTPFLSFLYLLCILFMTETEA). Positions 35 to 108 (VYIVYMGSAS…VFPDPHFQLH (74 aa)) constitute an Inhibitor I9 domain. One can recognise a Peptidase S8 domain in the interval 112-613 (SWDFLKYQTS…AGELSSTASM (502 aa)). Active-site charge relay system residues include D145 and H210. The PA domain occupies 381–465 (ADASEGSARA…SKEAAEIFSY (85 aa)). S546 serves as the catalytic Charge relay system.

It belongs to the peptidase S8 family. Expressed in roots, guard cells and meristemoid and pavement cells.

The protein localises to the secreted. It localises to the cell wall. The catalysed reaction is Release of an N-terminal tripeptide from a polypeptide.. Its function is as follows. Mediates CO(2)-controlled stomatal development by cleaving peptide EPF2 (AC Q8LC53). Not active on peptides EPF1 (AC Q8S8I4) or stomagen (AC Q9SV72). This chain is CO(2)-response secreted protease, found in Arabidopsis thaliana (Mouse-ear cress).